Reading from the N-terminus, the 160-residue chain is Cytochrome b6-f complex subunit 4 (160 aa).

The next 3 helical transmembrane spans lie at 36 to 56 (LLYV…GLAV), 95 to 115 (LLGI…PFIE), and 131 to 151 (AVFL…TFPI).

This sequence belongs to the cytochrome b family. PetD subfamily. In terms of assembly, the 4 large subunits of the cytochrome b6-f complex are cytochrome b6, subunit IV (17 kDa polypeptide, PetD), cytochrome f and the Rieske protein, while the 4 small subunits are PetG, PetL, PetM and PetN. The complex functions as a dimer.

Its subcellular location is the cellular thylakoid membrane. Functionally, component of the cytochrome b6-f complex, which mediates electron transfer between photosystem II (PSII) and photosystem I (PSI), cyclic electron flow around PSI, and state transitions. The protein is Cytochrome b6-f complex subunit 4 of Crocosphaera subtropica (strain ATCC 51142 / BH68) (Cyanothece sp. (strain ATCC 51142)).